The chain runs to 151 residues: Deoxyuridine 5'-triphosphate nucleotidohydrolase (151 aa).

Substrate contacts are provided by residues 69 to 71, asparagine 82, 86 to 88, and methionine 96; these read RSG and LID.

It belongs to the dUTPase family. Requires Mg(2+) as cofactor.

It catalyses the reaction dUTP + H2O = dUMP + diphosphate + H(+). The protein operates within pyrimidine metabolism; dUMP biosynthesis; dUMP from dCTP (dUTP route): step 2/2. Functionally, this enzyme is involved in nucleotide metabolism: it produces dUMP, the immediate precursor of thymidine nucleotides and it decreases the intracellular concentration of dUTP so that uracil cannot be incorporated into DNA. In Blochmanniella floridana, this protein is Deoxyuridine 5'-triphosphate nucleotidohydrolase.